A 270-amino-acid chain; its full sequence is Tryptophan synthase alpha chain (270 aa).

Active-site proton acceptor residues include Glu-49 and Asp-60.

Belongs to the TrpA family. In terms of assembly, tetramer of two alpha and two beta chains.

The catalysed reaction is (1S,2R)-1-C-(indol-3-yl)glycerol 3-phosphate + L-serine = D-glyceraldehyde 3-phosphate + L-tryptophan + H2O. It functions in the pathway amino-acid biosynthesis; L-tryptophan biosynthesis; L-tryptophan from chorismate: step 5/5. Functionally, the alpha subunit is responsible for the aldol cleavage of indoleglycerol phosphate to indole and glyceraldehyde 3-phosphate. In Paraburkholderia phytofirmans (strain DSM 17436 / LMG 22146 / PsJN) (Burkholderia phytofirmans), this protein is Tryptophan synthase alpha chain.